A 300-amino-acid chain; its full sequence is Ribonuclease HIII (300 aa).

The RNase H type-2 domain occupies 86–300; that stretch reads RPRLGVDESG…FNEICDSASA (215 aa). Asp-92, Glu-93, and Asp-196 together coordinate a divalent metal cation.

This sequence belongs to the RNase HII family. RnhC subfamily. Mn(2+) is required as a cofactor. Mg(2+) serves as cofactor.

Its subcellular location is the cytoplasm. The catalysed reaction is Endonucleolytic cleavage to 5'-phosphomonoester.. In terms of biological role, endonuclease that specifically degrades the RNA of RNA-DNA hybrids. The protein is Ribonuclease HIII of Chlamydia felis (strain Fe/C-56) (Chlamydophila felis).